The chain runs to 176 residues: Crossover junction endodeoxyribonuclease RuvC (176 aa).

Catalysis depends on residues Asp7, Glu67, and Asp139. Mg(2+)-binding residues include Asp7, Glu67, and Asp139.

It belongs to the RuvC family. As to quaternary structure, homodimer which binds Holliday junction (HJ) DNA. The HJ becomes 2-fold symmetrical on binding to RuvC with unstacked arms; it has a different conformation from HJ DNA in complex with RuvA. In the full resolvosome a probable DNA-RuvA(4)-RuvB(12)-RuvC(2) complex forms which resolves the HJ. Mg(2+) is required as a cofactor.

The protein resides in the cytoplasm. It carries out the reaction Endonucleolytic cleavage at a junction such as a reciprocal single-stranded crossover between two homologous DNA duplexes (Holliday junction).. Functionally, the RuvA-RuvB-RuvC complex processes Holliday junction (HJ) DNA during genetic recombination and DNA repair. Endonuclease that resolves HJ intermediates. Cleaves cruciform DNA by making single-stranded nicks across the HJ at symmetrical positions within the homologous arms, yielding a 5'-phosphate and a 3'-hydroxyl group; requires a central core of homology in the junction. The consensus cleavage sequence is 5'-(A/T)TT(C/G)-3'. Cleavage occurs on the 3'-side of the TT dinucleotide at the point of strand exchange. HJ branch migration catalyzed by RuvA-RuvB allows RuvC to scan DNA until it finds its consensus sequence, where it cleaves and resolves the cruciform DNA. The chain is Crossover junction endodeoxyribonuclease RuvC from Pelobacter propionicus (strain DSM 2379 / NBRC 103807 / OttBd1).